Reading from the N-terminus, the 335-residue chain is Probable cytosolic iron-sulfur protein assembly protein Ciao1 (335 aa).

7 WD repeats span residues 12–51 (GHKGRIWGVAWHPKGNVFASCGEDKAIRIWSLTGNTWSTK), 57–96 (GHKRTIREIQWSPCGQYLASASFDATTAIWSKSSGEFECN), 101–140 (GHENEVKSVSWSRSGGLLATCSRDKSVWIWEVAGDDEFEC), 146–185 (SHTQDVKRVVWHPTKEILASASYDNTIKMYAEEPIDNDWD), 192–231 (SHTSTIWGIDFDADGERLVSCSDDTTVKIWRAYHPGNSAG), 250–289 (QHSRAIYDVSWCKLTGLIATACGDDGIRIFKETSDSKPDE), and 301–335 (AHDQDVNSVQWNPVVAGQLISCSDDGTIKIWKVTE).

This sequence belongs to the WD repeat CIA1 family.

Its function is as follows. Essential component of the cytosolic iron-sulfur (Fe/S) protein assembly machinery. Required for the maturation of extramitochondrial Fe/S proteins. The sequence is that of Probable cytosolic iron-sulfur protein assembly protein Ciao1 from Drosophila yakuba (Fruit fly).